Reading from the N-terminus, the 171-residue chain is NADH-quinone oxidoreductase subunit I 1 (171 aa).

2 consecutive 4Fe-4S ferredoxin-type domains span residues 39–71 (IVLT…LSKA) and 81–110 (EHFR…LTPD). Cys51, Cys54, Cys57, Cys61, Cys90, Cys93, Cys96, and Cys100 together coordinate [4Fe-4S] cluster.

This sequence belongs to the complex I 23 kDa subunit family. As to quaternary structure, NDH-1 is composed of 14 different subunits. Subunits NuoA, H, J, K, L, M, N constitute the membrane sector of the complex. [4Fe-4S] cluster serves as cofactor.

Its subcellular location is the cell inner membrane. It catalyses the reaction a quinone + NADH + 5 H(+)(in) = a quinol + NAD(+) + 4 H(+)(out). Its function is as follows. NDH-1 shuttles electrons from NADH, via FMN and iron-sulfur (Fe-S) centers, to quinones in the respiratory chain. The immediate electron acceptor for the enzyme in this species is believed to be ubiquinone. Couples the redox reaction to proton translocation (for every two electrons transferred, four hydrogen ions are translocated across the cytoplasmic membrane), and thus conserves the redox energy in a proton gradient. The polypeptide is NADH-quinone oxidoreductase subunit I 1 (Rhodopseudomonas palustris (strain HaA2)).